The following is a 769-amino-acid chain: Serine/threonine-protein kinase PLK4 (769 aa).

One can recognise a Protein kinase domain in the interval Tyr14 to Met267. Residues Leu20–Val28 and Lys43 each bind ATP. Residue Asp138 is the Proton acceptor of the active site. The 118-residue stretch at Glu381 to Lys498 folds into the Cryptic POLO box 1 (CPB1) domain. Residues Thr499–Pro602 enclose the Cryptic POLO box 2 (CPB2) domain. Residues Pro660–Thr739 form the POLO box domain.

Belongs to the protein kinase superfamily. Ser/Thr protein kinase family. CDC5/Polo subfamily. In terms of assembly, homodimer. Interacts with Alms1a. Ubiquitinated by the SCF-slmb ubiquitin ligase complex; leading to its degradation by the proteasome during interphase and regulating centriole number and ensuring the block to centriole reduplication. Expressed in testis (at protein level).

The protein resides in the cytoplasm. Its subcellular location is the cytoskeleton. It is found in the microtubule organizing center. The protein localises to the centrosome. It localises to the centriole. The catalysed reaction is L-seryl-[protein] + ATP = O-phospho-L-seryl-[protein] + ADP + H(+). It catalyses the reaction L-threonyl-[protein] + ATP = O-phospho-L-threonyl-[protein] + ADP + H(+). Functionally, serine/threonine-protein kinase that plays a central role in centriole duplication. Able to trigger procentriole formation on the surface of the mother centriole cylinder, using mother centriole as a platform, leading to the recruitment of centriole biogenesis proteins such as Sas-6. When overexpressed, it is able to induce centrosome amplification through the simultaneous generation of multiple procentrioles adjoining each parental centriole during S phase. Centrosome amplification following overexpression can initiate tumorigenesis, highlighting the importance of centrosome regulation in cancers. This is Serine/threonine-protein kinase PLK4 (SAK) from Drosophila melanogaster (Fruit fly).